The chain runs to 97 residues: Aspartyl/glutamyl-tRNA(Asn/Gln) amidotransferase subunit C (97 aa).

Positions 68–97 are disordered; it reads ETGFTQEEALSNAPQQSQGQFRTPKVVESA. A compositionally biased stretch (polar residues) spans 70 to 88; the sequence is GFTQEEALSNAPQQSQGQF.

Belongs to the GatC family. In terms of assembly, heterotrimer of A, B and C subunits.

It carries out the reaction L-glutamyl-tRNA(Gln) + L-glutamine + ATP + H2O = L-glutaminyl-tRNA(Gln) + L-glutamate + ADP + phosphate + H(+). The catalysed reaction is L-aspartyl-tRNA(Asn) + L-glutamine + ATP + H2O = L-asparaginyl-tRNA(Asn) + L-glutamate + ADP + phosphate + 2 H(+). Functionally, allows the formation of correctly charged Asn-tRNA(Asn) or Gln-tRNA(Gln) through the transamidation of misacylated Asp-tRNA(Asn) or Glu-tRNA(Gln) in organisms which lack either or both of asparaginyl-tRNA or glutaminyl-tRNA synthetases. The reaction takes place in the presence of glutamine and ATP through an activated phospho-Asp-tRNA(Asn) or phospho-Glu-tRNA(Gln). The protein is Aspartyl/glutamyl-tRNA(Asn/Gln) amidotransferase subunit C of Akkermansia muciniphila (strain ATCC BAA-835 / DSM 22959 / JCM 33894 / BCRC 81048 / CCUG 64013 / CIP 107961 / Muc).